Consider the following 533-residue polypeptide: Na(+)/H(+) antiporter NhaB (533 aa).

Helical transmembrane passes span 28 to 50, 67 to 87, 96 to 116, 131 to 165, 254 to 274, 316 to 336, 364 to 384, 396 to 416, 454 to 474, and 481 to 501; these read FLII…VLVL, PGGL…SQVL, VLLL…LLLF, VSLM…FYSI, VPVL…GIFG, LIAG…SVII, LAVF…APVI, LVIF…VFVG, ATPN…APLI, and MVWM…MAIQ.

Belongs to the NhaB Na(+)/H(+) (TC 2.A.34) antiporter family.

The protein resides in the cell inner membrane. The catalysed reaction is 2 Na(+)(in) + 3 H(+)(out) = 2 Na(+)(out) + 3 H(+)(in). In terms of biological role, na(+)/H(+) antiporter that extrudes sodium in exchange for external protons. In Shewanella baltica (strain OS195), this protein is Na(+)/H(+) antiporter NhaB.